Reading from the N-terminus, the 760-residue chain is Complement C2 (760 aa).

The signal sequence occupies residues 1-18; sequence MAPLLALFYLLQLGPGLA. Sushi domains are found at residues 20 to 90, 92 to 151, and 154 to 212; these read LFCN…AVCK, VRCL…VCDN, and SHCP…ICRQ. 6 disulfides stabilise this stretch: C22–C62, C49–C89, C94–C136, C122–C149, C156–C197, and C182–C210. 2 N-linked (GlcNAc...) asparagine glycosylation sites follow: N27 and N32. N117 is a glycosylation site (N-linked (GlcNAc...) asparagine). Positions 261–459 constitute a VWFA domain; it reads NLYLLLDASQ…KALQQIFEHM (199 aa). The MIDAS-like motif motif lies at 267–271; that stretch reads DASQS. The Mg(2+) site is built by S269 and S271. N-linked (GlcNAc...) asparagine glycans are attached at residues N297 and N340. Position 344 (T344) interacts with Mg(2+). Disulfide bonds link C470–C590, C499–C515, C593–C609, C647–C674, and C685–C715. A Peptidase S1 domain is found at 471–752; it reads GVGNMSANAS…LQPWLRQHLD (282 aa). Residues N474 and N478 are each glycosylated (N-linked (GlcNAc...) asparagine). Active-site charge relay system residues include H514 and D570. N-linked (GlcNAc...) asparagine glycosylation occurs at N663. Catalysis depends on S689, which acts as the Charge relay system.

It belongs to the peptidase S1 family. As to quaternary structure, serine protease component of the C3 convertase, also named C4bC2b, composed of the serine protease complement C2b and complement C4b. Serine protease component of the C5 convertase, also named C4bC2bC3b, composed of the serine protease complement C2b, complement C3b, as well as complement C4b. It depends on Mg(2+) as a cofactor. Mn(2+) is required as a cofactor. Post-translationally, cleaved and activated by different proteases depending on the complement pathway to generate complement C2a and serine protease complement C2b chains. Cleaved and activated by C1S following activation by the classical complement system. Cleaved and activated by MASP2 following activation by the lectin complement system. Cleaved and activated by GZMK following activation by the GZMK complement system.

It is found in the secreted. The protein resides in the cell surface. The catalysed reaction is Selective cleavage of Arg-|-Ser bond in complement component C3 alpha-chain to form C3a and C3b, and Arg-|-Xaa bond in complement component C5 alpha-chain to form C5a and C5b.. Its function is as follows. Precursor of the catalytic component of the C3 and C5 convertase complexes, which are part of the complement pathway, a cascade of proteins that leads to phagocytosis and breakdown of pathogens and signaling that strengthens the adaptive immune system. Component C2 is part of the classical, lectin and GZMK complement systems. Functionally, catalytic component of the complement C3 and C5 convertase complexes. Following complement activation, recruited to the surface of pathogens by complement C4b opsonin to form the C3 convertase, or C3b and C4b opsonins to form the C5 convertase. As part of the C3 convertase, cleaves and activate C3 into C3a anaphylatoxin and C3b opsonin, the next components of the complement pathways. As part of the C5 convertase, cleaves and activate C5 into C5a anaphylatoxin and C5b component of the membrane attack complex. The chain is Complement C2 from Mus musculus (Mouse).